A 179-amino-acid chain; its full sequence is Adenine phosphoribosyltransferase (179 aa).

It belongs to the purine/pyrimidine phosphoribosyltransferase family. As to quaternary structure, homodimer.

It is found in the cytoplasm. It carries out the reaction AMP + diphosphate = 5-phospho-alpha-D-ribose 1-diphosphate + adenine. The protein operates within purine metabolism; AMP biosynthesis via salvage pathway; AMP from adenine: step 1/1. In terms of biological role, catalyzes a salvage reaction resulting in the formation of AMP, that is energically less costly than de novo synthesis. This Jannaschia sp. (strain CCS1) protein is Adenine phosphoribosyltransferase.